The chain runs to 84 residues: Defensin-like protein 49 (84 aa).

The N-terminal stretch at 1 to 29 is a signal peptide; it reads MGITKSLMIFFHIVLLAVSLSNNIILTSG. 4 disulfides stabilise this stretch: C40–C82, C44–C68, C54–C80, and C58–C81.

It belongs to the DEFL family.

It is found in the secreted. In Arabidopsis thaliana (Mouse-ear cress), this protein is Defensin-like protein 49.